Reading from the N-terminus, the 508-residue chain is Proto-oncogene tyrosine-protein kinase LCK (508 aa).

A lipid anchor (N-myristoyl glycine) is attached at Gly2. S-palmitoyl cysteine attachment occurs at residues Cys3 and Cys5. The region spanning 60 to 120 is the SH3 domain; the sequence is LQDKLVVALY…PHNFVAMVNS (61 aa). Residues 126–223 enclose the SH2 domain; sequence WFFKNLSRKN…GLCTRLGKPC (98 aa). The Protein kinase domain occupies 244 to 497; it reads LKLVEKLGAG…YMKSVLEDFF (254 aa). ATP is bound by residues 250 to 258 and Lys272; that span reads LGAGQFGEV. Asp363 functions as the Proton acceptor in the catalytic mechanism. At Tyr393 the chain carries Phosphotyrosine; by autocatalysis. Tyr504 is modified (phosphotyrosine).

It belongs to the protein kinase superfamily. Tyr protein kinase family. SRC subfamily. As to quaternary structure, binds to the cytoplasmic domain of cell surface receptors, such as CD4, CD8. Phosphorylated on Tyr-393, which increases enzymatic activity, this site is dephosphorylated by PTN22. Phosphorylated on Tyr-504, presumably by CSK, which decreases activity. Dephosphorylated by PTPRC/CD45. Dephosphorylation at Tyr-393 by PTPN2 negatively regulates T-cells differentiation. Post-translationally, palmitoylation regulates association with the plasma membrane.

It localises to the cell membrane. The protein localises to the cytoplasm. Its subcellular location is the cytosol. The enzyme catalyses L-tyrosyl-[protein] + ATP = O-phospho-L-tyrosyl-[protein] + ADP + H(+). Its activity is regulated as follows. Inhibited by tyrosine phosphorylation. In terms of biological role, tyrosine kinase that plays an essential role for the selection and maturation of developing T-cell in the thymus and in mature T-cell function. Is constitutively associated with the cytoplasmic portions of the CD4 and CD8 surface receptors and plays a key role in T-cell antigen receptor(TCR)-linked signal transduction pathways. The protein is Proto-oncogene tyrosine-protein kinase LCK (LCK) of Gallus gallus (Chicken).